The chain runs to 207 residues: Holliday junction branch migration complex subunit RuvA (207 aa).

The tract at residues M1–I64 is domain I. The segment at D65 to E143 is domain II. The flexible linker stretch occupies residues F144 to S152. The domain III stretch occupies residues A153 to K207.

Belongs to the RuvA family. As to quaternary structure, homotetramer. Forms an RuvA(8)-RuvB(12)-Holliday junction (HJ) complex. HJ DNA is sandwiched between 2 RuvA tetramers; dsDNA enters through RuvA and exits via RuvB. An RuvB hexamer assembles on each DNA strand where it exits the tetramer. Each RuvB hexamer is contacted by two RuvA subunits (via domain III) on 2 adjacent RuvB subunits; this complex drives branch migration. In the full resolvosome a probable DNA-RuvA(4)-RuvB(12)-RuvC(2) complex forms which resolves the HJ.

The protein resides in the cytoplasm. The RuvA-RuvB-RuvC complex processes Holliday junction (HJ) DNA during genetic recombination and DNA repair, while the RuvA-RuvB complex plays an important role in the rescue of blocked DNA replication forks via replication fork reversal (RFR). RuvA specifically binds to HJ cruciform DNA, conferring on it an open structure. The RuvB hexamer acts as an ATP-dependent pump, pulling dsDNA into and through the RuvAB complex. HJ branch migration allows RuvC to scan DNA until it finds its consensus sequence, where it cleaves and resolves the cruciform DNA. The polypeptide is Holliday junction branch migration complex subunit RuvA (Psychrobacter cryohalolentis (strain ATCC BAA-1226 / DSM 17306 / VKM B-2378 / K5)).